A 404-amino-acid polypeptide reads, in one-letter code: Glucose-1-phosphate adenylyltransferase (404 aa).

Alpha-D-glucose 1-phosphate contacts are provided by residues Tyr99, Gly164, 179–180 (EK), and Ser197.

It belongs to the bacterial/plant glucose-1-phosphate adenylyltransferase family. In terms of assembly, homotetramer.

It carries out the reaction alpha-D-glucose 1-phosphate + ATP + H(+) = ADP-alpha-D-glucose + diphosphate. The protein operates within glycan biosynthesis; glycogen biosynthesis. Involved in the biosynthesis of ADP-glucose, a building block required for the elongation reactions to produce glycogen. Catalyzes the reaction between ATP and alpha-D-glucose 1-phosphate (G1P) to produce pyrophosphate and ADP-Glc. This Rhodococcus opacus (strain B4) protein is Glucose-1-phosphate adenylyltransferase.